A 69-amino-acid polypeptide reads, in one-letter code: DNA gyrase inhibitor YacG (69 aa).

Zn(2+) is bound by residues cysteine 9, cysteine 12, cysteine 28, and cysteine 32. The disordered stretch occupies residues 48-69; it reads PVSPDAEDELFSGDLEAPHRGH.

It belongs to the DNA gyrase inhibitor YacG family. In terms of assembly, interacts with GyrB. Requires Zn(2+) as cofactor.

Functionally, inhibits all the catalytic activities of DNA gyrase by preventing its interaction with DNA. Acts by binding directly to the C-terminal domain of GyrB, which probably disrupts DNA binding by the gyrase. This is DNA gyrase inhibitor YacG from Pseudomonas syringae pv. syringae (strain B728a).